Here is a 505-residue protein sequence, read N- to C-terminus: Histidine ammonia-lyase (505 aa).

Residues 141-143 (ASG) constitute a cross-link (5-imidazolinone (Ala-Gly)). S142 is modified (2,3-didehydroalanine (Ser)).

The protein belongs to the PAL/histidase family. Contains an active site 4-methylidene-imidazol-5-one (MIO), which is formed autocatalytically by cyclization and dehydration of residues Ala-Ser-Gly.

The protein localises to the cytoplasm. It catalyses the reaction L-histidine = trans-urocanate + NH4(+). The protein operates within amino-acid degradation; L-histidine degradation into L-glutamate; N-formimidoyl-L-glutamate from L-histidine: step 1/3. This is Histidine ammonia-lyase from Bacillus anthracis.